The following is a 141-amino-acid chain: Small ribosomal subunit protein bS6 (141 aa).

Positions 110–141 (SRTKVSDQPAAVEAAEAPAAPAAQEESAPASA) are disordered. Positions 117–141 (QPAAVEAAEAPAAPAAQEESAPASA) are enriched in low complexity.

This sequence belongs to the bacterial ribosomal protein bS6 family.

Binds together with bS18 to 16S ribosomal RNA. This is Small ribosomal subunit protein bS6 from Acidobacterium capsulatum (strain ATCC 51196 / DSM 11244 / BCRC 80197 / JCM 7670 / NBRC 15755 / NCIMB 13165 / 161).